A 101-amino-acid chain; its full sequence is Nucleoid-associated protein Acid345_1974 (101 aa).

This sequence belongs to the YbaB/EbfC family. As to quaternary structure, homodimer.

It localises to the cytoplasm. It is found in the nucleoid. Binds to DNA and alters its conformation. May be involved in regulation of gene expression, nucleoid organization and DNA protection. In Koribacter versatilis (strain Ellin345), this protein is Nucleoid-associated protein Acid345_1974.